The primary structure comprises 368 residues: MNLKLLSSVAFAATIGFASAAYADITIGVIAPLTGPVAAFGDQVKKGAETAVEVINKAGGIKGEKVVLKFADDAGEPKQGVSAANQIVGDGIKFVVGLVTTGVAVPVSDVLSENGVLMVTPTATGPDLTARGLENVFRTCGRDGQQAEVMADYVLKNMKDKKVAVIHDKGAYGKGLADAFKAAINKGGITEVHYDSVTPGDKDFSALVTKLKSAGAEVVYFGGYHAEGGLLSRQLHDAGMQALVLGGEGLSNTEYWAIGGTNAQGTLFTNAKDATKNPAAKDAIQALKAKNIPAEAFTMNAYAAVEVIKAGIERAGSTDDSAAVAKALHDGKPIETAIGTLTYSETGDLSSPSFDIFKWDDGKIVGLE.

The N-terminal stretch at 1-23 (MNLKLLSSVAFAATIGFASAAYA) is a signal peptide.

This sequence belongs to the leucine-binding protein family.

Component of an amino-acid transport system. The protein is Leu/Ile/Val-binding protein homolog 3 of Brucella melitensis biotype 1 (strain ATCC 23456 / CCUG 17765 / NCTC 10094 / 16M).